The following is a 1029-amino-acid chain: Collagen, type I, alpha 1b (1029 aa).

Residues 1-990 (QMSYVDHSKS…KAPDPFRGGH (990 aa)) form a disordered region. A compositionally biased stretch (pro residues) spans 13-33 (PPQPGPMGPMGPRGPPGPPGS). A compositionally biased stretch (low complexity) spans 34-57 (SGPQGFTGPPGEPGEPGASGAMGS). Residues 67-81 (NGDDGEPGKPGRPGE) are compositionally biased toward basic and acidic residues. Composition is skewed to low complexity over residues 82 to 91 (RGAAGPQGAR), 120 to 129 (VPGVMGARGR), and 136 to 147 (SGARGNDGNTGP). The segment covering 163 to 182 (PGGAGAKGETGPAGGRGNEG) has biased composition (gly residues). Low complexity-rich tracts occupy residues 199 to 223 (AGPAGSPGTDGAPGAKGSPGAAGLA), 233 to 267 (AQGAVGAPGPKGNNGDPGASGPKGEPGAKGEPGPA), and 299 to 309 (ERGAPGARGFP). Over residues 310–322 (GADGGAGGKGAPG) the composition is skewed to gly residues. 2 stretches are compositionally biased toward low complexity: residues 323–351 (ERGAPGALGAQGATGESGSPGAPGAPGSK) and 429–465 (VGAPGPSGVAGPAGEKGEQGPAGPPGFQGLPGPQGAT). The span at 466-477 (GETGKGLGGPTG) shows a compositional bias: gly residues. Residues 478-497 (PRGAPGPAGNDGAKGEPGAA) are compositionally biased toward low complexity. Composition is skewed to gly residues over residues 498-507 (GAPGGLGAPG) and 531-540 (GGKGGDGAPG). Low complexity-rich tracts occupy residues 571–580 (VAGPTGPRGA) and 593–620 (AGFAGPPGADGQPGAKGETGDSGPKGDA). Composition is skewed to gly residues over residues 621-630 (GAPGPGGPVG) and 645-654 (GARGGAGPPG). Low complexity-rich tracts occupy residues 655 to 665 (ATGFPGPAGRV), 694 to 722 (ETGAAGRPGEAGAAGAPGPSGEKGSPGXD), 731 to 743 (PQGLAGQRGLPGQ), 830 to 839 (APGAVGPSGK), and 855 to 869 (SGPAGVRGPAGPAGA). Residues 870–884 (KGDRGEAGEAGDRGG) show a composition bias toward basic and acidic residues. A compositionally biased stretch (low complexity) spans 906–934 (PAGASGPAGPRGPAGSNGAPGKDGMNGLP). Residues 952–967 (AGPPGPPGPAGPPGPP) show a composition bias toward pro residues. Residues 999 to 1029 (TQKLPLLDLAPMDVGAPDQEFGVEVGPVCFL) form the Fibrillar collagen NC1 domain.

Belongs to the fibrillar collagen family.

The protein resides in the secreted. The protein localises to the extracellular space. Its subcellular location is the extracellular matrix. This chain is Collagen, type I, alpha 1b, found in Epinephelus aeneus (White grouper).